The following is a 211-amino-acid chain: WAP four-disulfide core domain protein 1 (211 aa).

Residues 1–23 (MGNCGRKVLRALSFLLLLGSSSA) form the signal peptide. Residues 50-99 (RQPHADRCPPPPRTLPPGACQATRCQADSECPRHRRCCYNGCAYACLEAV) enclose the WAP domain. Intrachain disulfides connect Cys57-Cys87, Cys69-Cys91, Cys74-Cys86, and Cys80-Cys95. Residues 182–198 (VLRQRLHKEYPEGDSKN) are compositionally biased toward basic and acidic residues. The interval 182–211 (VLRQRLHKEYPEGDSKNVAEPGKGQQRHFP) is disordered.

It is found in the secreted. Its function is as follows. Has growth inhibitory activity. The polypeptide is WAP four-disulfide core domain protein 1 (Wfdc1) (Mus musculus (Mouse)).